Reading from the N-terminus, the 173-residue chain is dCTP deaminase, dUMP-forming (173 aa).

Residues 93-98, Asp111, 119-121, and Gln138 contribute to the dCTP site; these read RSSIGR and TLE. The Proton donor/acceptor role is filled by Glu121.

Belongs to the dCTP deaminase family. As to quaternary structure, homotrimer.

The catalysed reaction is dCTP + 2 H2O = dUMP + NH4(+) + diphosphate. The protein operates within pyrimidine metabolism; dUMP biosynthesis; dUMP from dCTP: step 1/1. Bifunctional enzyme that catalyzes both the deamination of dCTP to dUTP and the hydrolysis of dUTP to dUMP without releasing the toxic dUTP intermediate. The polypeptide is dCTP deaminase, dUMP-forming (Leptospira borgpetersenii serovar Hardjo-bovis (strain JB197)).